Reading from the N-terminus, the 236-residue chain is Ubiquinone biosynthesis O-methyltransferase (236 aa).

4 residues coordinate S-adenosyl-L-methionine: Arg-39, Gly-59, Asp-80, and Met-124.

The protein belongs to the methyltransferase superfamily. UbiG/COQ3 family.

It catalyses the reaction a 3-demethylubiquinol + S-adenosyl-L-methionine = a ubiquinol + S-adenosyl-L-homocysteine + H(+). The enzyme catalyses a 3-(all-trans-polyprenyl)benzene-1,2-diol + S-adenosyl-L-methionine = a 2-methoxy-6-(all-trans-polyprenyl)phenol + S-adenosyl-L-homocysteine + H(+). It participates in cofactor biosynthesis; ubiquinone biosynthesis. O-methyltransferase that catalyzes the 2 O-methylation steps in the ubiquinone biosynthetic pathway. This is Ubiquinone biosynthesis O-methyltransferase from Shewanella oneidensis (strain ATCC 700550 / JCM 31522 / CIP 106686 / LMG 19005 / NCIMB 14063 / MR-1).